The chain runs to 732 residues: MAETKVIYHLDEEETPYLVKVPVPANEIRLRDFKAALGRGHAKYFFKAMDQDFGVVKEEISDDNAKLPCFNGRVVSWLVSSETSQTDSAPPAAEVRPDPPPVPPPVPPPPAERTSGIGDSRPPSFHPNVSGSTEQLDQDNESVISMRRDRVRRRDSTEQGVARGVNGRAERHLSGYESSSTLLTSEIETSICDSEEDDAMSRFSSSTEQSSASRLLKRHRRRRKQRPPRLERTSSFSSVTDSTMSLNIITVTLNMEKYNFLGISIVGQSNERGDGGIYIGSIMKGGAVAADGRIEPGDMLLQVNDINFENMSNDDAVRVLRDIVHKPGPIILTVAKCWDPSPQGYFTLPRNEPIQPIDPAAWVSHSAALSGSFPVYPGSASMSSMTSSTSVTETELSHALPPVSLFSLSVHTDLASVAKVMASPESGLEVRDRMWLKITIPNAFLGSDMVDWLYHHVEGFQDRREARKFASNLLKAGLIRHTVNKITFSEQCYYIFGDLTGCENYMANLSLNDNDGSSGASDQDTLAPLPLPGASPWPLLPTFSYQYPAPHPYSTQPPAYHELSSYSYGMGSAGSQHSEGSRSSGSNRSDGGRGTQKDERSGVVGVGGGESKSGSGSESEYSTRSSIRRIGGGEAGPPSERSTSSRPPLHHPPSVHSYAAPGVPLSYNPMMLMMMPPPPLPPPGACPPSSSVPPGAPPLVRDLASVPPELTASRQSFHMAMGNPSEFFVDVM.

In terms of domain architecture, DIX spans 1–82; that stretch reads MAETKVIYHL…RVVSWLVSSE (82 aa). Disordered stretches follow at residues 81–181 and 195–237; these read SETS…SSST and EEDD…SSFS. The span at 98–111 shows a compositional bias: pro residues; that stretch reads DPPPVPPPVPPPPA. Positions 146–157 are enriched in basic and acidic residues; the sequence is MRRDRVRRRDST. Residues 202 to 213 are compositionally biased toward polar residues; that stretch reads RFSSSTEQSSAS. The segment covering 215–227 has biased composition (basic residues); the sequence is LLKRHRRRRKQRP. The PDZ domain maps to 250 to 335; that stretch reads TVTLNMEKYN…KPGPIILTVA (86 aa). Residues 424-498 enclose the DEP domain; it reads PESGLEVRDR…SEQCYYIFGD (75 aa). 3 stretches are compositionally biased toward low complexity: residues 570–589, 612–629, and 637–647; these read MGSA…SNRS, KSGS…SIRR, and PPSERSTSSRP. Positions 570 to 660 are disordered; the sequence is MGSAGSQHSE…HPPSVHSYAA (91 aa).

Belongs to the DSH family. As to quaternary structure, can form homomultimers. Interacts with prickle1. Interacts (via the PDZ domain) with ccdc88c/dal and dact1-B/dpr. Interacts (via the DIX domain) with ARP/Axin-related protein and dact1-A/frodo. Interacts with sdc4, possibly via fz7. Interacts directly (via the DEP domain) with efnb1/ephrin-B1. May interact indirectly with the phosphorylated ephrin receptors ephb1 and ephb2 via SH domain-containing adapters. In terms of processing, phosphorylated. Phosphorylation is controlled by frizzled proteins, correlates with the onset of embryo dorsalizing events and is higher in the dorsal half of early cleavage embryos. Phosphorylated on tyrosine residues in response to association with efnb1/ephrin-B1.

The protein resides in the cytoplasm. It localises to the cytoplasmic vesicle. It is found in the cell projection. The protein localises to the cilium. Its subcellular location is the nucleus. The protein resides in the cell membrane. Involved in at least 2 independent signaling cascades, controlling cell fate via canonical Wnt signaling and cell polarity via a planar cell polarity (PCP) cascade. Acts synergistically with dal/dapple-like to activate Wnt signaling, stabilizing ctnnb1/beta-catenin and leading to dorsal axis formation. Also prevents degradation of ctnnb1/beta-catenin by displacing gsk3 from a complex with ARP/Axin-related protein. Has an additional role in anterior-posterior (A/P) axis formation, specifying different neuroectodermal cell fates along the A/P axis in a dose-dependent manner by activating several early patterning genes. In the PCP pathway, required at the cell membrane for PCP-mediated neural and mesodermal convergent extension during gastrulation and subsequent neural tube closure, acting to activate jnk. Also involved in blastopore closure and archenteron elongation during early, but not late, gastrulation. Associates with ephrin receptors and ligands and acts as part of a downstream PCP pathway to mediate ephrin-mediated cell repulsion via activation of rhoa. Required for efnb1/ephrin-B1-driven movement of non-retinal progenitor cells into the retina during eye field formation. Patterns the hindbrain. Required for ciliogenesis. Controls the docking of basal bodies to the apical plasma membrane; mediates the activation, but not localization of rhoa at the apical surface of ciliated cells during basal body docking. Furthermore, required for the association of basal bodies with membrane-bound vesicles and the vesicle-trafficking protein exoc4/sec8, and this association is in turn required for basal body docking. Once basal bodies are docked, required for the planar polarization of basal bodies that underlies ciliary beating and the directional fluid flow across ciliated epithelia. This chain is Segment polarity protein dishevelled homolog DVL-2, found in Xenopus tropicalis (Western clawed frog).